Reading from the N-terminus, the 272-residue chain is HMP-PP phosphatase (272 aa).

Aspartate 8 serves as the catalytic Nucleophile. Residues aspartate 8, aspartate 10, and aspartate 212 each contribute to the Mg(2+) site.

The protein belongs to the HAD-like hydrolase superfamily. Cof family. Mg(2+) serves as cofactor.

It catalyses the reaction 4-amino-2-methyl-5-(diphosphooxymethyl)pyrimidine + H2O = 4-amino-2-methyl-5-(phosphooxymethyl)pyrimidine + phosphate + H(+). In terms of biological role, catalyzes the hydrolysis of 4-amino-2-methyl-5-hydroxymethylpyrimidine pyrophosphate (HMP-PP) to 4-amino-2-methyl-5-hydroxymethylpyrimidine phosphate (HMP-P). This chain is HMP-PP phosphatase, found in Escherichia coli O81 (strain ED1a).